A 474-amino-acid chain; its full sequence is 3-isopropylmalate dehydratase large subunit (474 aa).

Cys-352, Cys-413, and Cys-416 together coordinate [4Fe-4S] cluster.

Belongs to the aconitase/IPM isomerase family. LeuC type 1 subfamily. Heterodimer of LeuC and LeuD. It depends on [4Fe-4S] cluster as a cofactor.

It catalyses the reaction (2R,3S)-3-isopropylmalate = (2S)-2-isopropylmalate. Its pathway is amino-acid biosynthesis; L-leucine biosynthesis; L-leucine from 3-methyl-2-oxobutanoate: step 2/4. Catalyzes the isomerization between 2-isopropylmalate and 3-isopropylmalate, via the formation of 2-isopropylmaleate. The chain is 3-isopropylmalate dehydratase large subunit from Pseudomonas syringae pv. syringae (strain B728a).